We begin with the raw amino-acid sequence, 558 residues long: uncharacterized protein (558 aa).

12 helical membrane passes run 21–41 (IFCF…LPIA), 69–89 (FLDA…STVV), 100–120 (IVLA…AFLA), 160–180 (IIFL…LFYF), 220–240 (AFQA…IDLI), 251–271 (GLGI…GIGY), 303–323 (VITN…VEFI), 386–406 (VFPV…AMFI), 413–433 (TAGG…VAKF), 454–474 (AFLV…LLPL), 479–499 (PVSF…VGLS), and 519–539 (ALCL…LTFV).

The protein belongs to the TrkH potassium transport family.

The protein localises to the cell membrane. This is an uncharacterized protein from Mycoplasma genitalium (strain ATCC 33530 / DSM 19775 / NCTC 10195 / G37) (Mycoplasmoides genitalium).